Reading from the N-terminus, the 231-residue chain is Aquaporin Z (231 aa).

Helical transmembrane passes span 11 to 31 and 36 to 56; these read FLGT…AAAF and IGLL…AFAI. Residues 65-67 carry the NPA 1 motif; the sequence is NPA. 3 helical membrane passes run 84–104, 132–152, and 161–181; these read LPYI…LYLI, MISV…VILG, and GFAP…SIPI. Positions 187 to 189 match the NPA 2 motif; that stretch reads NPA. Residues 203–223 form a helical membrane-spanning segment; it reads VSQLWLFWAAPIIGAILAGVI.

The protein belongs to the MIP/aquaporin (TC 1.A.8) family. As to quaternary structure, homotetramer.

Its subcellular location is the cell inner membrane. It catalyses the reaction H2O(in) = H2O(out). Its function is as follows. Channel that permits osmotically driven movement of water in both directions. It is involved in the osmoregulation and in the maintenance of cell turgor during volume expansion in rapidly growing cells. It mediates rapid entry or exit of water in response to abrupt changes in osmolarity. This is Aquaporin Z from Shewanella oneidensis (strain ATCC 700550 / JCM 31522 / CIP 106686 / LMG 19005 / NCIMB 14063 / MR-1).